A 475-amino-acid chain; its full sequence is MSPQTETKASVGFKAGVKDYKLTYYTPEYQTKDTDILAAFRVTPQPGVPPEEAGAAVAAESSTGTWTTVWTDGLTSLDRYKGRCYHIEPVAGEENQFIAYVAYPLDLFEEGSVTNMFTSIVGNVFGFKALRALRLEDLRVPPAYSKTFQGPPHGIQVERDKLNKYGRPLLGCTIKPKLGLSAKNYGRAVYECLRGGLDFTKDDENVNSQPFMRWRDRFVFCAEAIYKAQAETGEIKGHYLNATAGTCEEMIKRAVFARELGVPIVMHDYLTGGFTANTSLAHYCRDNGLLLHIHRAMHAVIDRQKNHGIHFRVLAKALRMSGGDHIHAGTVVGKLEGERDITLGFVDLLRDDFIEKDRSRGIYFTQDWVSLPGVLPVASGGIHVWHMPALTEIFGDDSVLQFGGGTLGHPWGNAPGAVANRVALEACVQARNEGRDLAREGNEIIREASKWSPELAAACEVWKEIKFEFPAMDTL.

Residues 1–2 constitute a propeptide that is removed on maturation; sequence MS. Pro-3 carries the N-acetylproline modification. Residue Lys-14 is modified to N6,N6,N6-trimethyllysine. Residues Asn-123 and Thr-173 each coordinate substrate. The active-site Proton acceptor is the Lys-175. Residue Lys-177 coordinates substrate. Mg(2+) is bound by residues Lys-201, Asp-203, and Glu-204. Lys-201 is modified (N6-carboxylysine). His-294 (proton acceptor) is an active-site residue. Residues Arg-295, His-327, and Ser-379 each contribute to the substrate site.

It belongs to the RuBisCO large chain family. Type I subfamily. Heterohexadecamer of 8 large chains and 8 small chains; disulfide-linked. The disulfide link is formed within the large subunit homodimers. Mg(2+) serves as cofactor. In terms of processing, the disulfide bond which can form in the large chain dimeric partners within the hexadecamer appears to be associated with oxidative stress and protein turnover.

It localises to the plastid. It is found in the chloroplast. The enzyme catalyses 2 (2R)-3-phosphoglycerate + 2 H(+) = D-ribulose 1,5-bisphosphate + CO2 + H2O. It carries out the reaction D-ribulose 1,5-bisphosphate + O2 = 2-phosphoglycolate + (2R)-3-phosphoglycerate + 2 H(+). In terms of biological role, ruBisCO catalyzes two reactions: the carboxylation of D-ribulose 1,5-bisphosphate, the primary event in carbon dioxide fixation, as well as the oxidative fragmentation of the pentose substrate in the photorespiration process. Both reactions occur simultaneously and in competition at the same active site. This is Ribulose bisphosphate carboxylase large chain from Buxus microphylla (Littleleaf boxwood).